Here is a 304-residue protein sequence, read N- to C-terminus: Retrotransposon Gag-like protein 4 (304 aa).

The CCHC-type zinc finger occupies 276–293; it reads QLCVYCNQAGHFTRDCLA.

In terms of tissue distribution, in adults, expressed in brain, eye, kidney, ovary and testis. Weakly expressed in thymus, heart and muscle.

Involved in cognitive function in the brain, possibly via the noradrenergic system. This chain is Retrotransposon Gag-like protein 4, found in Mus musculus (Mouse).